The following is a 423-amino-acid chain: Adenosylmethionine-8-amino-7-oxononanoate aminotransferase (423 aa).

Tryptophan 51 contacts substrate. 111–112 contributes to the pyridoxal 5'-phosphate binding site; sequence GS. Tyrosine 144 is a substrate binding site. Residue aspartate 243 coordinates pyridoxal 5'-phosphate. Residues lysine 272 and glycine 306 each coordinate substrate. Position 272 is an N6-(pyridoxal phosphate)lysine (lysine 272). Residue 307–308 participates in pyridoxal 5'-phosphate binding; it reads PT. Residue arginine 390 participates in substrate binding.

The protein belongs to the class-III pyridoxal-phosphate-dependent aminotransferase family. BioA subfamily. As to quaternary structure, homodimer. Pyridoxal 5'-phosphate is required as a cofactor.

Its subcellular location is the cytoplasm. The enzyme catalyses (8S)-8-amino-7-oxononanoate + S-adenosyl-L-methionine = S-adenosyl-4-methylsulfanyl-2-oxobutanoate + (7R,8S)-7,8-diammoniononanoate. It functions in the pathway cofactor biosynthesis; biotin biosynthesis; 7,8-diaminononanoate from 8-amino-7-oxononanoate (SAM route): step 1/1. Its function is as follows. Catalyzes the transfer of the alpha-amino group from S-adenosyl-L-methionine (SAM) to 7-keto-8-aminopelargonic acid (KAPA) to form 7,8-diaminopelargonic acid (DAPA). It is the only aminotransferase known to utilize SAM as an amino donor. This chain is Adenosylmethionine-8-amino-7-oxononanoate aminotransferase, found in Corynebacterium glutamicum (strain ATCC 13032 / DSM 20300 / JCM 1318 / BCRC 11384 / CCUG 27702 / LMG 3730 / NBRC 12168 / NCIMB 10025 / NRRL B-2784 / 534).